A 395-amino-acid polypeptide reads, in one-letter code: DNA primase small subunit PriS (395 aa).

Catalysis depends on residues D95, D97, and D302.

The protein belongs to the eukaryotic-type primase small subunit family. Heterodimer of a small subunit (PriS) and a large subunit (PriL). Mg(2+) is required as a cofactor. Requires Mn(2+) as cofactor.

Catalytic subunit of DNA primase, an RNA polymerase that catalyzes the synthesis of short RNA molecules used as primers for DNA polymerase during DNA replication. The small subunit contains the primase catalytic core and has DNA synthesis activity on its own. Binding to the large subunit stabilizes and modulates the activity, increasing the rate of DNA synthesis while decreasing the length of the DNA fragments, and conferring RNA synthesis capability. The DNA polymerase activity may enable DNA primase to also catalyze primer extension after primer synthesis. May also play a role in DNA repair. The protein is DNA primase small subunit PriS of Methanothrix thermoacetophila (strain DSM 6194 / JCM 14653 / NBRC 101360 / PT) (Methanosaeta thermophila).